The following is a 332-amino-acid chain: Glyceraldehyde-3-phosphate dehydrogenase 1 (332 aa).

Residues R11, I12, D33, and T120 each contribute to the NAD(+) site. D-glyceraldehyde 3-phosphate contacts are provided by residues 149 to 151 (SCT), T180, 209 to 210 (TG), and R232. C150 serves as the catalytic Nucleophile. N314 and Y318 together coordinate NAD(+).

It belongs to the glyceraldehyde-3-phosphate dehydrogenase family. Homotetramer.

The protein localises to the cytoplasm. It catalyses the reaction D-glyceraldehyde 3-phosphate + phosphate + NAD(+) = (2R)-3-phospho-glyceroyl phosphate + NADH + H(+). The catalysed reaction is NADH + H2O = (6R)-NADHX. It carries out the reaction NADH + H2O = (6S)-NADHX. The enzyme catalyses NADPH + H2O = (6R)-NADPHX. It catalyses the reaction NADPH + H2O = (6S)-NADPHX. It participates in carbohydrate degradation; glycolysis; pyruvate from D-glyceraldehyde 3-phosphate: step 1/5. Its function is as follows. Glyceraldehyde-3-phosphate dehydrogenase (GAPDH) involved in glycolysis and gluconeogenesis. Catalyzes the reaction of glyceraldehyde-3-phosphate to 1,3 bis-phosphoglycerate. The contribution of the TDH1, TDH2, and TDH3 to the total glyceraldehyde-3-phosphate dehydrogenase activity is 10-15, 25-30, and 50-60%, respectively. May be involved in a process other than glycolysis because it is synthesized by cells in stationary phase. Functionally, as a side activity, catalyzes the hydration of the nicotinamide ring of NADH or NADPH at the C6 position to give the corresponding hydrates, NADHX and NADPHX, which exist as R and S epimers, that cannot act as electron donors or acceptors and inhibit several dehydrogenases, making them toxic. In Saccharomyces cerevisiae (strain ATCC 204508 / S288c) (Baker's yeast), this protein is Glyceraldehyde-3-phosphate dehydrogenase 1.